Here is a 74-residue protein sequence, read N- to C-terminus: Porwaprin-a (74 aa).

A signal peptide spans Met1–Ser24. The region spanning Arg27 to Ile71 is the WAP domain. 4 disulfides stabilise this stretch: Cys34–Cys59, Cys42–Cys63, Cys46–Cys58, and Cys52–Cys67.

This sequence belongs to the venom waprin family. In terms of tissue distribution, expressed by the venom gland.

It is found in the secreted. Damages membranes of susceptible bacteria. Has no hemolytic activity. Not toxic to mice. Does not inhibit the proteinases elastase and cathepsin G. This is Porwaprin-a from Pseudechis porphyriacus (Red-bellied black snake).